The following is a 356-amino-acid chain: Phosphoserine aminotransferase (356 aa).

Arginine 41 contacts L-glutamate. Pyridoxal 5'-phosphate-binding positions include 75–76 (AT), tryptophan 100, threonine 147, aspartate 166, and glutamine 189. Lysine 190 is subject to N6-(pyridoxal phosphate)lysine. 227–228 (NT) is a pyridoxal 5'-phosphate binding site.

Belongs to the class-V pyridoxal-phosphate-dependent aminotransferase family. SerC subfamily. In terms of assembly, homodimer. Pyridoxal 5'-phosphate is required as a cofactor.

The protein resides in the cytoplasm. The enzyme catalyses O-phospho-L-serine + 2-oxoglutarate = 3-phosphooxypyruvate + L-glutamate. It catalyses the reaction 4-(phosphooxy)-L-threonine + 2-oxoglutarate = (R)-3-hydroxy-2-oxo-4-phosphooxybutanoate + L-glutamate. It functions in the pathway amino-acid biosynthesis; L-serine biosynthesis; L-serine from 3-phospho-D-glycerate: step 2/3. Functionally, catalyzes the reversible conversion of 3-phosphohydroxypyruvate to phosphoserine and of 3-hydroxy-2-oxo-4-phosphonooxybutanoate to phosphohydroxythreonine. This is Phosphoserine aminotransferase from Exiguobacterium sp. (strain ATCC BAA-1283 / AT1b).